We begin with the raw amino-acid sequence, 406 residues long: Biofilm regulatory protein A (406 aa).

The first 26 residues, 1-26 (MKIGKKILIMLVTIFLTSLVALGVYA), serve as a signal peptide directing secretion. Residues 347 to 397 (SSSASDYSSSGNYSGSSSDYGSSSSYGSNSSSGSSSDYSGQNSYNQGNYQQ) show a composition bias toward low complexity. The segment at 347–406 (SSSASDYSSSGNYSGSSSDYGSSSSYGSNSSSGSSSDYSGQNSYNQGNYQQPAAGTGIGN) is disordered.

The protein belongs to the LytR/CpsA/Psr (LCP) family.

Its subcellular location is the cell envelope. Involved in biofilm formation, cell division, autolysis and the regulation of acid and oxidative stress tolerance. May be associated with systemic virulence in blood. In Streptococcus mutans serotype c (strain ATCC 700610 / UA159), this protein is Biofilm regulatory protein A (brpA).